The chain runs to 229 residues: Transcriptional activator protein IrlR (229 aa).

The Response regulatory domain occupies 2 to 115 (RILIVEDEPK…ELVARVRSIL (114 aa)). The residue at position 51 (D51) is a 4-aspartylphosphate. The segment at residues 123–221 (STVLRIADLE…VRGMGYVLEV (99 aa)) is a DNA-binding region (ompR/PhoB-type).

Phosphorylated by IrlS.

Its function is as follows. Member of the two-component regulatory system IrlR/IrlS. May be involved in invasion of eukaryotic cells and heavy-metal resistance. This Burkholderia pseudomallei (strain 1026b) protein is Transcriptional activator protein IrlR (irlR).